Here is a 208-residue protein sequence, read N- to C-terminus: Dephospho-CoA kinase (208 aa).

A DPCK domain is found at 8–208; it reads LVGVTGGIGS…VYQSLLTVVE (201 aa). Position 16 to 21 (16 to 21) interacts with ATP; it reads GSGKST.

This sequence belongs to the CoaE family.

Its subcellular location is the cytoplasm. It catalyses the reaction 3'-dephospho-CoA + ATP = ADP + CoA + H(+). It participates in cofactor biosynthesis; coenzyme A biosynthesis; CoA from (R)-pantothenate: step 5/5. In terms of biological role, catalyzes the phosphorylation of the 3'-hydroxyl group of dephosphocoenzyme A to form coenzyme A. In Chlorobaculum tepidum (strain ATCC 49652 / DSM 12025 / NBRC 103806 / TLS) (Chlorobium tepidum), this protein is Dephospho-CoA kinase.